Reading from the N-terminus, the 458-residue chain is Argininosuccinate lyase (458 aa).

Belongs to the lyase 1 family. Argininosuccinate lyase subfamily.

The protein resides in the cytoplasm. The enzyme catalyses 2-(N(omega)-L-arginino)succinate = fumarate + L-arginine. It functions in the pathway amino-acid biosynthesis; L-arginine biosynthesis; L-arginine from L-ornithine and carbamoyl phosphate: step 3/3. The sequence is that of Argininosuccinate lyase from Geobacter sulfurreducens (strain ATCC 51573 / DSM 12127 / PCA).